Here is an 82-residue protein sequence, read N- to C-terminus: ATP synthase subunit c, chloroplastic (82 aa).

2 helical membrane passes run 3-23 (PLIS…ASIG) and 57-77 (FAFM…LLFA).

This sequence belongs to the ATPase C chain family. In terms of assembly, F-type ATPases have 2 components, F(1) - the catalytic core - and F(0) - the membrane proton channel. F(1) has five subunits: alpha(3), beta(3), gamma(1), delta(1), epsilon(1). F(0) has four main subunits: a(1), b(1), b'(1) and c(10-14). The alpha and beta chains form an alternating ring which encloses part of the gamma chain. F(1) is attached to F(0) by a central stalk formed by the gamma and epsilon chains, while a peripheral stalk is formed by the delta, b and b' chains.

Its subcellular location is the plastid. The protein localises to the chloroplast thylakoid membrane. Functionally, f(1)F(0) ATP synthase produces ATP from ADP in the presence of a proton or sodium gradient. F-type ATPases consist of two structural domains, F(1) containing the extramembraneous catalytic core and F(0) containing the membrane proton channel, linked together by a central stalk and a peripheral stalk. During catalysis, ATP synthesis in the catalytic domain of F(1) is coupled via a rotary mechanism of the central stalk subunits to proton translocation. In terms of biological role, key component of the F(0) channel; it plays a direct role in translocation across the membrane. A homomeric c-ring of between 10-14 subunits forms the central stalk rotor element with the F(1) delta and epsilon subunits. The protein is ATP synthase subunit c, chloroplastic of Mesostigma viride (Green alga).